A 122-amino-acid chain; its full sequence is uncharacterized protein (122 aa).

Positions 1 to 17 (MKYSSIFSMLSFFILFA) are cleaved as a signal peptide.

This is an uncharacterized protein from Escherichia coli (strain K12).